A 187-amino-acid chain; its full sequence is MKIIGILGIQGDIEEHEIAVKKINCIPKRIRSVSDLDEIDALIIPGGESTTIGKLMVKYGFIEKIRNLDIPILGTCAGMVLLSKGTGKEQPLLKILNVTIKRNAYGSQKDSFEKEIILDGKKLNAVFIRAPMVDKILEKTVEIISKDGESIVGVREGNIMAISFHPELSNDGIILYEYFLKNFVEKN.

47–49 (GES) is an L-glutamine binding site. The Nucleophile role is filled by cysteine 76. L-glutamine-binding positions include arginine 102 and 128–129 (IR). Residues histidine 165 and glutamate 167 each act as charge relay system in the active site.

It belongs to the glutaminase PdxT/SNO family. As to quaternary structure, in the presence of PdxS, forms a dodecamer of heterodimers. Only shows activity in the heterodimer.

It catalyses the reaction aldehydo-D-ribose 5-phosphate + D-glyceraldehyde 3-phosphate + L-glutamine = pyridoxal 5'-phosphate + L-glutamate + phosphate + 3 H2O + H(+). It carries out the reaction L-glutamine + H2O = L-glutamate + NH4(+). It functions in the pathway cofactor biosynthesis; pyridoxal 5'-phosphate biosynthesis. Its function is as follows. Catalyzes the hydrolysis of glutamine to glutamate and ammonia as part of the biosynthesis of pyridoxal 5'-phosphate. The resulting ammonia molecule is channeled to the active site of PdxS. The protein is Pyridoxal 5'-phosphate synthase subunit PdxT of Methanococcus vannielii (strain ATCC 35089 / DSM 1224 / JCM 13029 / OCM 148 / SB).